The sequence spans 490 residues: Aspartyl/glutamyl-tRNA(Asn/Gln) amidotransferase subunit B (490 aa).

It belongs to the GatB/GatE family. GatB subfamily. In terms of assembly, heterotrimer of A, B and C subunits.

The enzyme catalyses L-glutamyl-tRNA(Gln) + L-glutamine + ATP + H2O = L-glutaminyl-tRNA(Gln) + L-glutamate + ADP + phosphate + H(+). The catalysed reaction is L-aspartyl-tRNA(Asn) + L-glutamine + ATP + H2O = L-asparaginyl-tRNA(Asn) + L-glutamate + ADP + phosphate + 2 H(+). Functionally, allows the formation of correctly charged Asn-tRNA(Asn) or Gln-tRNA(Gln) through the transamidation of misacylated Asp-tRNA(Asn) or Glu-tRNA(Gln) in organisms which lack either or both of asparaginyl-tRNA or glutaminyl-tRNA synthetases. The reaction takes place in the presence of glutamine and ATP through an activated phospho-Asp-tRNA(Asn) or phospho-Glu-tRNA(Gln). This is Aspartyl/glutamyl-tRNA(Asn/Gln) amidotransferase subunit B from Burkholderia pseudomallei (strain K96243).